The chain runs to 455 residues: Probable glycine dehydrogenase (decarboxylating) subunit 1 (455 aa).

Belongs to the GcvP family. N-terminal subunit subfamily. As to quaternary structure, the glycine cleavage system is composed of four proteins: P, T, L and H. In this organism, the P 'protein' is a heterodimer of two subunits.

It catalyses the reaction N(6)-[(R)-lipoyl]-L-lysyl-[glycine-cleavage complex H protein] + glycine + H(+) = N(6)-[(R)-S(8)-aminomethyldihydrolipoyl]-L-lysyl-[glycine-cleavage complex H protein] + CO2. In terms of biological role, the glycine cleavage system catalyzes the degradation of glycine. The P protein binds the alpha-amino group of glycine through its pyridoxal phosphate cofactor; CO(2) is released and the remaining methylamine moiety is then transferred to the lipoamide cofactor of the H protein. This Francisella philomiragia subsp. philomiragia (strain ATCC 25017 / CCUG 19701 / FSC 153 / O#319-036) protein is Probable glycine dehydrogenase (decarboxylating) subunit 1.